A 205-amino-acid chain; its full sequence is Glutathione peroxidase 1 (205 aa).

Serine 37 carries the post-translational modification Phosphoserine. Selenocysteine 52 is an active-site residue. Residue selenocysteine 52 is a non-standard amino acid, selenocysteine. An N6-acetyllysine; alternate mark is found at lysine 91 and lysine 117. An N6-succinyllysine; alternate mark is found at lysine 91 and lysine 117. The N-linked (Glc) (glycation) lysine; in vitro glycan is linked to lysine 117. Residue lysine 124 is modified to N6-acetyllysine. Lysine 151 carries the N6-acetyllysine; alternate modification. Lysine 151 bears the N6-succinyllysine; alternate mark. Phosphoserine occurs at positions 200 and 204.

Belongs to the glutathione peroxidase family. Homotetramer. Interacts with MIEN1. In terms of processing, during periods of oxidative stress, Sec-52 may react with a superoxide radical, irreversibly lose hydroselenide and be converted to dehydroalanine.

The protein localises to the cytoplasm. Its subcellular location is the mitochondrion. The enzyme catalyses 2 glutathione + H2O2 = glutathione disulfide + 2 H2O. The catalysed reaction is a hydroperoxy polyunsaturated fatty acid + 2 glutathione = a hydroxy polyunsaturated fatty acid + glutathione disulfide + H2O. It catalyses the reaction tert-butyl hydroperoxide + 2 glutathione = tert-butanol + glutathione disulfide + H2O. It carries out the reaction cumene hydroperoxide + 2 glutathione = 2-phenylpropan-2-ol + glutathione disulfide + H2O. The enzyme catalyses (13S)-hydroperoxy-(9Z,11E)-octadecadienoate + 2 glutathione = (13S)-hydroxy-(9Z,11E)-octadecadienoate + glutathione disulfide + H2O. The catalysed reaction is (9S)-hydroperoxy-(10E,12Z)-octadecadienoate + 2 glutathione = (9S)-hydroxy-(10E,12Z)-octadecadienoate + glutathione disulfide + H2O. It catalyses the reaction (5S)-hydroperoxy-(6E,8Z,11Z,14Z)-eicosatetraenoate + 2 glutathione = (5S)-hydroxy-(6E,8Z,11Z,14Z)-eicosatetraenoate + glutathione disulfide + H2O. It carries out the reaction (12S)-hydroperoxy-(5Z,8Z,10E,14Z)-eicosatetraenoate + 2 glutathione = (12S)-hydroxy-(5Z,8Z,10E,14Z)-eicosatetraenoate + glutathione disulfide + H2O. The enzyme catalyses (12R)-hydroperoxy-(5Z,8Z,10E,14Z)-eicosatetraenoate + 2 glutathione = (12R)-hydroxy-(5Z,8Z,10E,14Z)-eicosatetraenoate + glutathione disulfide + H2O. The catalysed reaction is (15S)-hydroperoxy-(5Z,8Z,11Z,13E)-eicosatetraenoate + 2 glutathione = (15S)-hydroxy-(5Z,8Z,11Z,13E)-eicosatetraenoate + glutathione disulfide + H2O. It catalyses the reaction (5S)-hydroperoxy-(6E,8Z,11Z,14Z,17Z)-eicosapentaenoate + 2 glutathione = (5S)-hydroxy-(6E,8Z,11Z,14Z,17Z)-eicosapentaenoate + glutathione disulfide + H2O. It carries out the reaction (15S)-hydroperoxy-(5Z,8Z,11Z,13E,17Z)-eicosapentaenoate + 2 glutathione = (15S)-hydroxy-(5Z,8Z,11Z,13E,17Z)-eicosapentaenoate + glutathione disulfide + H2O. The enzyme catalyses (15S)-hydroperoxy-(11Z,13E)-eicosadienoate + 2 glutathione = (15S)-hydroxy-(11Z,13E)-eicosadienoate + glutathione disulfide + H2O. The catalysed reaction is (17S)-hydroperoxy-(4Z,7Z,10Z,13Z,15E,19Z)-docosahexaenoate + 2 glutathione = (17S)-hydroxy-(4Z,7Z,10Z,13Z,15E,19Z)-docosahexaenoate + glutathione disulfide + H2O. Catalyzes the reduction of hydroperoxides in a glutathione-dependent manner thus regulating cellular redox homeostasis. Can reduce small soluble hydroperoxides such as H2O2, cumene hydroperoxide and tert-butyl hydroperoxide, as well as several fatty acid-derived hydroperoxides. In platelets catalyzes the reduction of 12-hydroperoxyeicosatetraenoic acid, the primary product of the arachidonate 12-lipoxygenase pathway. The chain is Glutathione peroxidase 1 (GPX1) from Bos taurus (Bovine).